We begin with the raw amino-acid sequence, 339 residues long: Ketol-acid reductoisomerase (NADP(+)) (339 aa).

Positions 1 to 182 constitute a KARI N-terminal Rossmann domain; the sequence is MRVYYDRDAD…GGGRSGVIET (182 aa). NADP(+)-binding positions include 24-27, arginine 48, serine 51, threonine 53, and 83-86; these read YGSQ and DEHQ. Residue histidine 108 is part of the active site. Glycine 134 is an NADP(+) binding site. The KARI C-terminal knotted domain maps to 183–328; sequence TFKEECETDL…AELRAMMPWI (146 aa). Positions 191, 195, 227, and 231 each coordinate Mg(2+). Serine 252 contacts substrate.

Belongs to the ketol-acid reductoisomerase family. Mg(2+) is required as a cofactor.

It catalyses the reaction (2R)-2,3-dihydroxy-3-methylbutanoate + NADP(+) = (2S)-2-acetolactate + NADPH + H(+). It carries out the reaction (2R,3R)-2,3-dihydroxy-3-methylpentanoate + NADP(+) = (S)-2-ethyl-2-hydroxy-3-oxobutanoate + NADPH + H(+). It functions in the pathway amino-acid biosynthesis; L-isoleucine biosynthesis; L-isoleucine from 2-oxobutanoate: step 2/4. It participates in amino-acid biosynthesis; L-valine biosynthesis; L-valine from pyruvate: step 2/4. Involved in the biosynthesis of branched-chain amino acids (BCAA). Catalyzes an alkyl-migration followed by a ketol-acid reduction of (S)-2-acetolactate (S2AL) to yield (R)-2,3-dihydroxy-isovalerate. In the isomerase reaction, S2AL is rearranged via a Mg-dependent methyl migration to produce 3-hydroxy-3-methyl-2-ketobutyrate (HMKB). In the reductase reaction, this 2-ketoacid undergoes a metal-dependent reduction by NADPH to yield (R)-2,3-dihydroxy-isovalerate. The sequence is that of Ketol-acid reductoisomerase (NADP(+)) from Rhizorhabdus wittichii (strain DSM 6014 / CCUG 31198 / JCM 15750 / NBRC 105917 / EY 4224 / RW1) (Sphingomonas wittichii).